We begin with the raw amino-acid sequence, 326 residues long: Ketol-acid reductoisomerase (NADP(+)) (326 aa).

The KARI N-terminal Rossmann domain occupies 2–182 (AKIYGDEDAS…GFTRAGVIKT (181 aa)). NADP(+) contacts are provided by residues 25-28 (YGSQ), arginine 48, serine 53, and 83-86 (DEVQ). Histidine 108 is a catalytic residue. Residue glycine 134 coordinates NADP(+). Residues 183–325 (TFREEVETDL…ERLRKMMGFE (143 aa)) enclose the KARI C-terminal knotted domain. Mg(2+) contacts are provided by aspartate 191, glutamate 195, glutamate 227, and glutamate 231. Residue serine 252 participates in substrate binding.

It belongs to the ketol-acid reductoisomerase family. Mg(2+) is required as a cofactor.

It catalyses the reaction (2R)-2,3-dihydroxy-3-methylbutanoate + NADP(+) = (2S)-2-acetolactate + NADPH + H(+). It carries out the reaction (2R,3R)-2,3-dihydroxy-3-methylpentanoate + NADP(+) = (S)-2-ethyl-2-hydroxy-3-oxobutanoate + NADPH + H(+). Its pathway is amino-acid biosynthesis; L-isoleucine biosynthesis; L-isoleucine from 2-oxobutanoate: step 2/4. It functions in the pathway amino-acid biosynthesis; L-valine biosynthesis; L-valine from pyruvate: step 2/4. Functionally, involved in the biosynthesis of branched-chain amino acids (BCAA). Catalyzes an alkyl-migration followed by a ketol-acid reduction of (S)-2-acetolactate (S2AL) to yield (R)-2,3-dihydroxy-isovalerate. In the isomerase reaction, S2AL is rearranged via a Mg-dependent methyl migration to produce 3-hydroxy-3-methyl-2-ketobutyrate (HMKB). In the reductase reaction, this 2-ketoacid undergoes a metal-dependent reduction by NADPH to yield (R)-2,3-dihydroxy-isovalerate. In Methanopyrus kandleri (strain AV19 / DSM 6324 / JCM 9639 / NBRC 100938), this protein is Ketol-acid reductoisomerase (NADP(+)).